The chain runs to 1144 residues: Guanine nucleotide-binding protein G(s) subunit alpha isoforms XLas (1144 aa).

4 disordered regions span residues 1–186, 316–558, 622–657, and 735–772; these read MGML…LAPG, DDDT…PAAG, SASA…SAWP, and RSRS…DKKR. The span at 31-46 shows a compositional bias: low complexity; it reads LEAQGAAAPGAGVGPA. Positions 343 to 356 are enriched in basic and acidic residues; sequence KSEHAKRPPLERQA. Residues 358 to 369 are compositionally biased toward polar residues; the sequence is ETGNSPISSTTA. Residues 370-381 show a composition bias toward basic and acidic residues; that stretch reads EEAKVPSLERGE. Low complexity-rich tracts occupy residues 467–499 and 518–558; these read PAAA…AAEA and EPAA…PAAG. The segment covering 644–654 has biased composition (pro residues); it reads PPTPRPAPRPS. A compositionally biased stretch (basic and acidic residues) spans 743 to 767; sequence KAKDPMEERRKQMRKEAMEMREQKR. Residues 745–772 adopt a coiled-coil conformation; it reads KDPMEERRKQMRKEAMEMREQKRADKKR. The G-alpha domain occupies 789–1144; sequence CTHRLLLLGA…RMHLRQYELL (356 aa). A G1 motif region spans residues 792–805; sequence RLLLLGAGESGKST. A GTP-binding site is contributed by 797–805; the sequence is GAGESGKST. Serine 804 serves as a coordination point for Mg(2+). The disordered stretch occupies residues 818–840; sequence FNGEGGEEDPQAARSNSDGEKAT. Residues 837 to 863 are a coiled coil; that stretch reads EKATKVQDIKNNLKEAIETIVAAMSNL. Residues 946–954 are G2 motif; it reads DLPRCRVLT. GTP-binding positions include 947–954, 973–977, and 1042–1045; these read LPRCRVLT, DVGGQ, and NKQD. Arginine 951 bears the ADP-ribosylarginine; by cholera toxin mark. Threonine 954 is a Mg(2+) binding site. Residues 969–978 form a G3 motif region; sequence FHMFDVGGQR. Residues 1038–1045 form a G4 motif region; it reads ILFLNKQD. The residue at position 1102 (serine 1102) is a Phosphoserine. The G5 motif stretch occupies residues 1114–1119; that stretch reads TCAVDT. Position 1116 (alanine 1116) interacts with GTP.

It belongs to the G-alpha family. G(s) subfamily. G proteins are composed of 3 units; alpha, beta and gamma. The alpha chain contains the guanine nucleotide binding site. Interacts through its N-terminal region with ALEX which is produced from the same locus in a different open reading frame. This interaction may inhibit its adenylyl cyclase-stimulating activity. Interacts with MAGED2. Enriched in neuroendocrine tissues with a particularly high level of expression in pituitary where it is abundant in intermediate and anterior lobes. In adrenal gland, found in central region containing medullary chromaffin cells but not in cortex. In cerebellum, strongly expressed in perikarya of Purkinje cells. Not detected in liver, kidney or neurohypophysis.

The protein localises to the cell membrane. Its subcellular location is the apical cell membrane. Functionally, guanine nucleotide-binding proteins (G proteins) function as transducers in numerous signaling pathways controlled by G protein-coupled receptors (GPCRs). Signaling involves the activation of adenylyl cyclases, resulting in increased levels of the signaling molecule cAMP. GNAS functions downstream of several GPCRs, including beta-adrenergic receptors. XLas isoforms interact with the same set of receptors as Gnas isoforms. The chain is Guanine nucleotide-binding protein G(s) subunit alpha isoforms XLas from Rattus norvegicus (Rat).